The following is a 438-amino-acid chain: Minor capsid protein p49 (438 aa).

Belongs to the asfivirus p49 structural protein family.

The protein localises to the virion. Its function is as follows. Together with the penton and the other minor capsid proteins (M1249L, p17), forms a complicated network immediately below the outer capsid shell, stabilizing the whole capsid. Plays an essential role in the formation of infectious virus particles. Especially required for the formation of the capsid vertices. During virion assembly, associates with the membrane and probably mediates the docking of the penton complex to the inner membrane, where it recruits the capsomers to form the penton core. This is Minor capsid protein p49 from Ornithodoros (relapsing fever ticks).